We begin with the raw amino-acid sequence, 268 residues long: LOB domain-containing protein 22 (268 aa).

The segment at 1–31 (MPSGKPSSVFPLHPKPTPLKPSSSTSSSNNN) is disordered. The segment covering 22–31 (SSSTSSSNNN) has biased composition (low complexity). Positions 35–136 (QACAACKYQR…NELEIVLQQL (102 aa)) constitute an LOB domain.

Belongs to the LOB domain-containing protein family.

In Arabidopsis thaliana (Mouse-ear cress), this protein is LOB domain-containing protein 22 (LBD22).